A 239-amino-acid polypeptide reads, in one-letter code: Uridylate kinase (239 aa).

Position 10–13 (10–13 (KLSG)) interacts with ATP. Residue Gly53 coordinates UMP. 2 residues coordinate ATP: Gly54 and Arg58. Residues Asp73 and 135–142 (TGRPYFTT) contribute to the UMP site. 3 residues coordinate ATP: Asn163, Tyr169, and Asp172.

This sequence belongs to the UMP kinase family. Homohexamer.

The protein localises to the cytoplasm. The catalysed reaction is UMP + ATP = UDP + ADP. Its pathway is pyrimidine metabolism; CTP biosynthesis via de novo pathway; UDP from UMP (UMPK route): step 1/1. Its activity is regulated as follows. Inhibited by UTP. Functionally, catalyzes the reversible phosphorylation of UMP to UDP. This Mycoplasmopsis synoviae (strain 53) (Mycoplasma synoviae) protein is Uridylate kinase.